The primary structure comprises 384 residues: N-acetyldiaminopimelate deacetylase (384 aa).

Residue Asp-74 is part of the active site. Glu-133 (proton acceptor) is an active-site residue.

It belongs to the peptidase M20A family. N-acetyldiaminopimelate deacetylase subfamily.

The enzyme catalyses N-acetyl-(2S,6S)-2,6-diaminopimelate + H2O = (2S,6S)-2,6-diaminopimelate + acetate. The protein operates within amino-acid biosynthesis; L-lysine biosynthesis via DAP pathway; LL-2,6-diaminopimelate from (S)-tetrahydrodipicolinate (acetylase route): step 3/3. In terms of biological role, catalyzes the conversion of N-acetyl-diaminopimelate to diaminopimelate and acetate. The polypeptide is N-acetyldiaminopimelate deacetylase (Pediococcus pentosaceus (strain ATCC 25745 / CCUG 21536 / LMG 10740 / 183-1w)).